A 275-amino-acid polypeptide reads, in one-letter code: Bis(5'-nucleosyl)-tetraphosphatase, symmetrical (275 aa).

This sequence belongs to the Ap4A hydrolase family.

The enzyme catalyses P(1),P(4)-bis(5'-adenosyl) tetraphosphate + H2O = 2 ADP + 2 H(+). Functionally, hydrolyzes diadenosine 5',5'''-P1,P4-tetraphosphate to yield ADP. The sequence is that of Bis(5'-nucleosyl)-tetraphosphatase, symmetrical (apaH) from Haemophilus influenzae (strain ATCC 51907 / DSM 11121 / KW20 / Rd).